Consider the following 122-residue polypeptide: Large ribosomal subunit protein bL12 (122 aa).

The protein belongs to the bacterial ribosomal protein bL12 family. As to quaternary structure, homodimer. Part of the ribosomal stalk of the 50S ribosomal subunit. Forms a multimeric L10(L12)X complex, where L10 forms an elongated spine to which 2 to 4 L12 dimers bind in a sequential fashion. Binds GTP-bound translation factors.

Its function is as follows. Forms part of the ribosomal stalk which helps the ribosome interact with GTP-bound translation factors. Is thus essential for accurate translation. The polypeptide is Large ribosomal subunit protein bL12 (Sodalis glossinidius (strain morsitans)).